A 54-amino-acid polypeptide reads, in one-letter code: Ribulose bisphosphate carboxylase large chain (54 aa).

A propeptide spanning residues 1–2 (MS) is cleaved from the precursor. Residue Pro3 is modified to N-acetylproline. Lys14 is subject to N6,N6,N6-trimethyllysine.

Belongs to the RuBisCO large chain family. Type I subfamily. In terms of assembly, heterohexadecamer of 8 large chains and 8 small chains.

Its subcellular location is the plastid. It localises to the chloroplast. The catalysed reaction is 2 (2R)-3-phosphoglycerate + 2 H(+) = D-ribulose 1,5-bisphosphate + CO2 + H2O. It carries out the reaction D-ribulose 1,5-bisphosphate + O2 = 2-phosphoglycolate + (2R)-3-phosphoglycerate + 2 H(+). In terms of biological role, ruBisCO catalyzes two reactions: the carboxylation of D-ribulose 1,5-bisphosphate, the primary event in carbon dioxide fixation, as well as the oxidative fragmentation of the pentose substrate in the photorespiration process. Both reactions occur simultaneously and in competition at the same active site. This is Ribulose bisphosphate carboxylase large chain (rbcL) from Colletia hystrix (Crucifixion thorn).